Consider the following 165-residue polypeptide: Nucleotide-binding protein NATL1_05371 (165 aa).

The protein belongs to the YajQ family.

Functionally, nucleotide-binding protein. This Prochlorococcus marinus (strain NATL1A) protein is Nucleotide-binding protein NATL1_05371.